Consider the following 245-residue polypeptide: 5'-nucleotidase SurE (245 aa).

Residues Asp-8, Asp-9, Ser-39, and Asn-91 each contribute to the a divalent metal cation site.

Belongs to the SurE nucleotidase family. A divalent metal cation serves as cofactor.

The protein resides in the cytoplasm. The enzyme catalyses a ribonucleoside 5'-phosphate + H2O = a ribonucleoside + phosphate. Its function is as follows. Nucleotidase that shows phosphatase activity on nucleoside 5'-monophosphates. The sequence is that of 5'-nucleotidase SurE from Herminiimonas arsenicoxydans.